Reading from the N-terminus, the 480-residue chain is Islet cell autoantigen 1 (480 aa).

The AH domain occupies A50–E253. 2 stretches are compositionally biased toward basic and acidic residues: residues L276 to V293 and E306 to K321. Disordered regions lie at residues L276 to G338 and L400 to A421.

The protein localises to the cytoplasm. Its subcellular location is the cytosol. The protein resides in the golgi apparatus membrane. It localises to the cytoplasmic vesicle. It is found in the secretory vesicle membrane. The protein localises to the secretory vesicle. Its subcellular location is the synaptic vesicle membrane. Its function is as follows. May play a role in neurotransmitter secretion. The polypeptide is Islet cell autoantigen 1 (Rattus norvegicus (Rat)).